A 601-amino-acid chain; its full sequence is Phosphomethylpyrimidine synthase (601 aa).

Disordered regions lie at residues 1-31 (MTNK…GKSI) and 100-141 (AGRP…RDGQ). Residues 100–112 (AGRPVRPEDDGIK) show a composition bias toward basic and acidic residues. Substrate-binding positions include asparagine 208, methionine 237, tyrosine 266, histidine 302, 322 to 324 (SRG), 363 to 366 (DGLR), and glutamate 402. Histidine 406 provides a ligand contact to Zn(2+). Residue tyrosine 429 coordinates substrate. Histidine 470 lines the Zn(2+) pocket. Cysteine 550, cysteine 553, and cysteine 558 together coordinate [4Fe-4S] cluster.

Belongs to the ThiC family. [4Fe-4S] cluster serves as cofactor.

The enzyme catalyses 5-amino-1-(5-phospho-beta-D-ribosyl)imidazole + S-adenosyl-L-methionine = 4-amino-2-methyl-5-(phosphooxymethyl)pyrimidine + CO + 5'-deoxyadenosine + formate + L-methionine + 3 H(+). Its pathway is cofactor biosynthesis; thiamine diphosphate biosynthesis. Catalyzes the synthesis of the hydroxymethylpyrimidine phosphate (HMP-P) moiety of thiamine from aminoimidazole ribotide (AIR) in a radical S-adenosyl-L-methionine (SAM)-dependent reaction. This is Phosphomethylpyrimidine synthase from Streptomyces avermitilis (strain ATCC 31267 / DSM 46492 / JCM 5070 / NBRC 14893 / NCIMB 12804 / NRRL 8165 / MA-4680).